We begin with the raw amino-acid sequence, 575 residues long: V-type ATP synthase alpha chain (575 aa).

238-245 serves as a coordination point for ATP; the sequence is GPFGAGKT.

This sequence belongs to the ATPase alpha/beta chains family.

It carries out the reaction ATP + H2O + 4 H(+)(in) = ADP + phosphate + 5 H(+)(out). In terms of biological role, produces ATP from ADP in the presence of a proton gradient across the membrane. The V-type alpha chain is a catalytic subunit. This Borreliella burgdorferi (strain ZS7) (Borrelia burgdorferi) protein is V-type ATP synthase alpha chain.